The following is a 65-amino-acid chain: Sarcoplasmic/endoplasmic reticulum calcium ATPase regulator ARLN (65 aa).

Methionine 1 is modified (N-acetylmethionine). Residues 1–36 are disordered; that stretch reads MEVSQAASGTDGVRERRGSFEAGRRNQDEAPQSGMN. Basic and acidic residues predominate over residues 12-28; it reads GVRERRGSFEAGRRNQD. Serine 19 carries the post-translational modification Phosphoserine. Residues 44–64 form a helical membrane-spanning segment; it reads WLDLWLFILFDLALFVFVYLL.

In terms of assembly, homooligomer. Can also form heterooligomers with other sarcoplasmic/endoplasmic reticulum calcium ATPase (SERCA) regulators ERLN, PLN, SLN and STRIT1/DWORF. Monomer. Interacts as a monomer with ATP2A2/SERCA2; the interaction results in inhibition of ATP2A2 Ca(2+) affinity. In terms of tissue distribution, in the embryo, expressed in heart, epidermal epithelium, salivary gland, brown fat, intestinal epithelium and bladder urothelium.

It localises to the endoplasmic reticulum membrane. Its function is as follows. Inhibits the activity of the calcium ATPases ATP2A2/SERCA2 and ATP2A3/SERCA3 by decreasing their apparent affinity for Ca(2+). In Mus musculus (Mouse), this protein is Sarcoplasmic/endoplasmic reticulum calcium ATPase regulator ARLN (Arln).